Here is a 63-residue protein sequence, read N- to C-terminus: Large ribosomal subunit protein bL32 (63 aa).

Residues 1 to 18 (MAHPKAKVSKSRRDKRRA) show a composition bias toward basic residues. The tract at residues 1–25 (MAHPKAKVSKSRRDKRRAQFNARTK) is disordered.

The protein belongs to the bacterial ribosomal protein bL32 family.

This Chlorobium phaeovibrioides (strain DSM 265 / 1930) (Prosthecochloris vibrioformis (strain DSM 265)) protein is Large ribosomal subunit protein bL32.